The following is a 547-amino-acid chain: Glutamyl-tRNA(Gln) amidotransferase subunit B, mitochondrial (547 aa).

Belongs to the GatB/GatE family. GatB subfamily. Subunit of the heterotrimeric GatFAB amidotransferase (AdT) complex, composed of A, B and F subunits.

It is found in the mitochondrion. It catalyses the reaction L-glutamyl-tRNA(Gln) + L-glutamine + ATP + H2O = L-glutaminyl-tRNA(Gln) + L-glutamate + ADP + phosphate + H(+). Allows the formation of correctly charged Gln-tRNA(Gln) through the transamidation of misacylated Glu-tRNA(Gln) in the mitochondria. The reaction takes place in the presence of glutamine and ATP through an activated gamma-phospho-Glu-tRNA(Gln). This Lachancea thermotolerans (strain ATCC 56472 / CBS 6340 / NRRL Y-8284) (Yeast) protein is Glutamyl-tRNA(Gln) amidotransferase subunit B, mitochondrial.